The chain runs to 207 residues: MGKGTLYIVSAPSGAGKSSLISAMLERNPTYAMKVSVSHTTRNMRPGEEDGVHYHFVAKEEFETLIAKGDFLEYAEVFGNYYGTSRVWIEETLEKGIDVFLDIDWQGARQIREQMPKAKSIFILPPSNGELERRLNTRGQDSAEVIAKRMAEAKSEISHYSEYDYVIVNDDFDTALMDFKAILRAERLKEEKQAAKYKGMLDALLAE.

One can recognise a Guanylate kinase-like domain in the interval 4–184 (GTLYIVSAPS…ALMDFKAILR (181 aa)). 11 to 18 (APSGAGKS) is a binding site for ATP.

It belongs to the guanylate kinase family.

It is found in the cytoplasm. The catalysed reaction is GMP + ATP = GDP + ADP. In terms of biological role, essential for recycling GMP and indirectly, cGMP. In Vibrio parahaemolyticus serotype O3:K6 (strain RIMD 2210633), this protein is Guanylate kinase.